The chain runs to 261 residues: uncharacterized protein (261 aa).

41–48 (GKSGSGKS) provides a ligand contact to ATP.

This sequence belongs to the IIV-6 075L family.

This is an uncharacterized protein from Invertebrate iridescent virus 3 (IIV-3).